Consider the following 499-residue polypeptide: Trichoplein keratin filament-binding protein (499 aa).

Coiled coils occupy residues 17–143, 169–304, and 405–485; these read LEQQ…LYEQ, EQIT…LSAL, and NRER…TQRG. The trichohyalin/plectin homology domain stretch occupies residues 260-426; it reads RKMEQCRKKT…RQFTSREKKQ (167 aa).

This sequence belongs to the TCHP family.

The protein localises to the cytoplasm. The protein resides in the cytoskeleton. It is found in the microtubule organizing center. It localises to the centrosome. Functionally, may act as a 'capping' or 'branching' protein for keratin filaments in the cell periphery. May regulate K8/K18 filament and desmosome organization mainly at the apical or peripheral regions of simple epithelial cells. The protein is Trichoplein keratin filament-binding protein of Xenopus laevis (African clawed frog).